The chain runs to 105 residues: Large ribosomal subunit protein uL24 (105 aa).

It belongs to the universal ribosomal protein uL24 family. In terms of assembly, part of the 50S ribosomal subunit.

Its function is as follows. One of two assembly initiator proteins, it binds directly to the 5'-end of the 23S rRNA, where it nucleates assembly of the 50S subunit. One of the proteins that surrounds the polypeptide exit tunnel on the outside of the subunit. The chain is Large ribosomal subunit protein uL24 from Xylella fastidiosa (strain M12).